A 114-amino-acid polypeptide reads, in one-letter code: Biofilm growth-associated repressor (114 aa).

Positions 17–111 (DMEKRANEVA…ALYTIFCAQE (95 aa)) constitute an HTH arsR-type domain. The H-T-H motif DNA-binding region spans 51–74 (VGELEQQIGIGQPTLSQQLGVLRE).

In terms of biological role, represses an operon that comprises itself, XF_0764, XF_0765, XF_0766 and blh. Binds to a palindromic AT-rich sequence spanning the -10 region of the blh promoter and blocks transcription of the operon. This is Biofilm growth-associated repressor (bigR) from Xylella fastidiosa (strain 9a5c).